The sequence spans 129 residues: Glycine cleavage system H protein (129 aa).

Residues 24-106 (LLKIGVSEFA…IGNGWLLIIK (83 aa)) enclose the Lipoyl-binding domain. Position 65 is an N6-lipoyllysine (K65).

This sequence belongs to the GcvH family. As to quaternary structure, the glycine cleavage system is composed of four proteins: P, T, L and H. (R)-lipoate serves as cofactor.

Its function is as follows. The glycine cleavage system catalyzes the degradation of glycine. The H protein shuttles the methylamine group of glycine from the P protein to the T protein. In Prochlorococcus marinus (strain MIT 9515), this protein is Glycine cleavage system H protein.